Reading from the N-terminus, the 213-residue chain is Germin-like protein 8-14 (213 aa).

The first 23 residues, 1 to 23 (MAKAVMMLPVLLSFLLLPFSSMA), serve as a signal peptide directing secretion. C29 and C44 are disulfide-bonded. In terms of domain architecture, Cupin type-1 spans 56–203 (HGLAAAGNTS…VTFLDDAQVK (148 aa)). N-linked (GlcNAc...) asparagine glycosylation is present at N63. Mn(2+) is bound by residues H104, H106, E111, and H151.

Belongs to the germin family. Oligomer (believed to be a pentamer but probably hexamer). Phosphorylated on threonine residue.

It is found in the secreted. The protein localises to the extracellular space. Its subcellular location is the apoplast. May play a role in plant defense. Probably has no oxalate oxidase activity even if the active site is conserved. This Oryza sativa subsp. japonica (Rice) protein is Germin-like protein 8-14 (GER5).